Here is a 335-residue protein sequence, read N- to C-terminus: Glyceraldehyde-3-phosphate dehydrogenase 2 (335 aa).

Residues 13 to 14 and Gly111 each bind NAD(+); that span reads TI. 140–142 provides a ligand contact to D-glyceraldehyde 3-phosphate; it reads SCN. Catalysis depends on Cys141, which acts as the Nucleophile. Arg169 provides a ligand contact to NAD(+). Residues Thr171 and 195–196 each bind D-glyceraldehyde 3-phosphate; that span reads HG. Gln300 is an NAD(+) binding site.

The protein belongs to the glyceraldehyde-3-phosphate dehydrogenase family. Homotetramer.

The protein localises to the cytoplasm. The enzyme catalyses D-glyceraldehyde 3-phosphate + phosphate + NADP(+) = (2R)-3-phospho-glyceroyl phosphate + NADPH + H(+). It catalyses the reaction D-glyceraldehyde 3-phosphate + phosphate + NAD(+) = (2R)-3-phospho-glyceroyl phosphate + NADH + H(+). It participates in carbohydrate degradation; glycolysis; pyruvate from D-glyceraldehyde 3-phosphate: step 1/5. This is Glyceraldehyde-3-phosphate dehydrogenase 2 (gapB) from Methanosarcina acetivorans (strain ATCC 35395 / DSM 2834 / JCM 12185 / C2A).